Consider the following 430-residue polypeptide: Meiotically up-regulated gene 132 protein (430 aa).

It belongs to the UPF0300 family.

Its subcellular location is the mitochondrion. In terms of biological role, has a role in meiosis. This is Meiotically up-regulated gene 132 protein (mug132) from Schizosaccharomyces pombe (strain 972 / ATCC 24843) (Fission yeast).